A 710-amino-acid polypeptide reads, in one-letter code: uncharacterized protein (710 aa).

Positions 1–40 (MSESDGAFKSPSLPPSHHAPAPMSPEKIRAPAEQMDGPVE) are disordered. Positions 15 to 25 (PSHHAPAPMSP) are enriched in low complexity. The FHA domain occupies 108 to 165 (VVIGRIKPGCDLLMEHPSISRYHCILQYGNDKMSKTGKGWHIFELGSTHGSRMNKKRL). 3 coiled-coil regions span residues 206–240 (TEMKLRKHKKELEAKLRAAAAQEMIDDEKREKEEE), 409–440 (ETDTYESLCRKLEESKKEIIECQKHLDELSAG), and 471–502 (AKTKMEKSKWRQKLMAATHESQKLEKLVKIAK). Positions 230 to 250 (IDDEKREKEEEGCGWGMDYGE) are disordered. 3 disordered regions span residues 535–560 (EIDQTPSQGPGPSTSATLPATVAPTS), 591–619 (KNSLPAVDEPSSVKDEVSEETPQKEAFGS), and 671–710 (EDYGAGVEDRDEKYSTWMPPNADQSEAKQDALRAKFAGRY). A compositionally biased stretch (polar residues) spans 538–560 (QTPSQGPGPSTSATLPATVAPTS). The stretch at 613-661 (QKEAFGSKVQKRVAQWEEELEAEKEELAKKQKLEAEEEAKKKVQRVRRR) forms a coiled coil.

This is an uncharacterized protein from Caenorhabditis elegans.